Consider the following 125-residue polypeptide: EGSGGSGSSGNFTTGSNVHMSSVTNTSNAGTGGTGTNTGTNTGTGTGTGTGTGTGTGTGTGTGTGTGTGTGTGTGTGKGAGAGTGTATNETAGPGTTTTTTTRSTTTAATAASPPVTLTESLLNK.

Positions 1–125 (EGSGGSGSSG…VTLTESLLNK (125 aa)) are disordered. 3 consecutive repeat copies span residues 30-31 (GT), 33-34 (GT), and 35-36 (GT). Over residues 30–84 (GTGGTGTNTGTNTGTGTGTGTGTGTGTGTGTGTGTGTGTGTGTGTGTGKGAGAGT) the composition is skewed to gly residues. The interval 30–86 (GTGGTGTNTGTNTGTGTGTGTGTGTGTGTGTGTGTGTGTGTGTGTGTGKGAGAGTGT) is 28 X 2 AA approximate tandem repeats of G-[TA]. A 4; approximate repeat occupies 37-38 (NT). Copy 5 of the repeat occupies 39–40 (GT). Residues 41–42 (NT) form a 6; approximate repeat. Tandem repeats lie at residues 43–44 (GT), 45–46 (GT), 47–48 (GT), 49–50 (GT), 51–52 (GT), 53–54 (GT), 55–56 (GT), 57–58 (GT), 59–60 (GT), 61–62 (GT), 63–64 (GT), 65–66 (GT), 67–68 (GT), 69–70 (GT), 71–72 (GT), 73–74 (GT), and 75–76 (GT). The 24; approximate repeat unit spans residues 77-78 (GK). 4 tandem repeats follow at residues 79–80 (GA), 81–82 (GA), 83–84 (GT), and 85–86 (GT). Residues 85 to 112 (GTATNETAGPGTTTTTTTRSTTTAATAA) are compositionally biased toward low complexity. The segment covering 116–125 (VTLTESLLNK) has biased composition (polar residues).

In terms of assembly, forms a heterodimer with timeless (TIM); the complex then translocates into the nucleus. Post-translationally, phosphorylated with a circadian rhythmicity, probably by the double-time protein (dbt). Phosphorylation could be implicated in the stability of per monomer and in the formation of heterodimer per-tim.

The protein resides in the nucleus. It is found in the cytoplasm. It localises to the perinuclear region. In terms of biological role, essential for biological clock functions. Determines the period length of circadian and ultradian rhythms; an increase in PER dosage leads to shortened circadian rhythms and a decrease leads to lengthened circadian rhythms. Essential for the circadian rhythmicity of locomotor activity, eclosion behavior, and for the rhythmic component of the male courtship song that originates in the thoracic nervous system. The biological cycle depends on the rhythmic formation and nuclear localization of the TIM-PER complex. Light induces the degradation of TIM, which promotes elimination of PER. Nuclear activity of the heterodimer coordinatively regulates PER and TIM transcription through a negative feedback loop. Behaves as a negative element in circadian transcriptional loop. Does not appear to bind DNA, suggesting indirect transcriptional inhibition. The chain is Period circadian protein (per) from Drosophila ananassae (Fruit fly).